A 101-amino-acid chain; its full sequence is C-X-C motif chemokine 3 (101 aa).

The N-terminal stretch at 1–32 is a signal peptide; that stretch reads MAPPTRRLLNAALLLLLLLMATSHQPSGTVVA. 2 cysteine pairs are disulfide-bonded: Cys37/Cys63 and Cys39/Cys79.

Belongs to the intercrine alpha (chemokine CxC) family.

The protein localises to the secreted. Functionally, ligand for CXCR2. Has chemotactic activity for neutrophils. May play a role in inflammation and exert its effects on endothelial cells in an autocrine fashion. The polypeptide is C-X-C motif chemokine 3 (Cxcl3) (Rattus norvegicus (Rat)).